The following is an 89-amino-acid chain: Large ribosomal subunit protein bL31B (89 aa).

It belongs to the bacterial ribosomal protein bL31 family. Type B subfamily. Part of the 50S ribosomal subunit.

The polypeptide is Large ribosomal subunit protein bL31B (Corynebacterium aurimucosum (strain ATCC 700975 / DSM 44827 / CIP 107346 / CN-1) (Corynebacterium nigricans)).